A 310-amino-acid chain; its full sequence is uncharacterized protein (310 aa).

The active site involves H239.

It belongs to the IUNH family.

It localises to the cytoplasm. The protein localises to the nucleus. This is an uncharacterized protein from Schizosaccharomyces pombe (strain 972 / ATCC 24843) (Fission yeast).